Here is a 189-residue protein sequence, read N- to C-terminus: uncharacterized protein (189 aa).

The protein belongs to the flavoredoxin family. The cofactor is FMN.

This is an uncharacterized protein from Escherichia coli (strain K12).